A 727-amino-acid chain; its full sequence is Catalase-peroxidase (727 aa).

Residues 1–24 (MDQKSDSAGKCPVAHTAPRGRSNR) are disordered. The segment at residues 95-217 (WHSAGTYRIT…LAAVQMGLIY (123 aa)) is a cross-link (tryptophyl-tyrosyl-methioninium (Trp-Tyr) (with M-243)). His96 (proton acceptor) is an active-site residue. A cross-link (tryptophyl-tyrosyl-methioninium (Tyr-Met) (with W-95)) is located at residues 217–243 (YVNPEGPNGNPDPVAAARDIRETFARM). Residue His258 participates in heme b binding.

The protein belongs to the peroxidase family. Peroxidase/catalase subfamily. In terms of assembly, homodimer or homotetramer. The cofactor is heme b. In terms of processing, formation of the three residue Trp-Tyr-Met cross-link is important for the catalase, but not the peroxidase activity of the enzyme.

It carries out the reaction H2O2 + AH2 = A + 2 H2O. It catalyses the reaction 2 H2O2 = O2 + 2 H2O. In terms of biological role, bifunctional enzyme with both catalase and broad-spectrum peroxidase activity. The protein is Catalase-peroxidase of Rhizobium meliloti (strain 1021) (Ensifer meliloti).